The chain runs to 331 residues: Ferredoxin--NADP reductase 2 (331 aa).

FAD is bound by residues Glu37, Gln45, Tyr50, Val90, Phe124, Asp286, and Thr327.

The protein belongs to the ferredoxin--NADP reductase type 2 family. As to quaternary structure, homodimer. FAD is required as a cofactor.

The catalysed reaction is 2 reduced [2Fe-2S]-[ferredoxin] + NADP(+) + H(+) = 2 oxidized [2Fe-2S]-[ferredoxin] + NADPH. The sequence is that of Ferredoxin--NADP reductase 2 from Listeria monocytogenes serovar 1/2a (strain ATCC BAA-679 / EGD-e).